Reading from the N-terminus, the 58-residue chain is Small ribosomal subunit protein bS21B (58 aa).

The protein belongs to the bacterial ribosomal protein bS21 family.

This chain is Small ribosomal subunit protein bS21B (rpsU2), found in Nostoc sp. (strain PCC 7120 / SAG 25.82 / UTEX 2576).